The sequence spans 247 residues: Adenosylcobinamide-GDP ribazoletransferase (247 aa).

6 consecutive transmembrane segments (helical) span residues Ile-31 to Ile-51, Leu-55 to Leu-75, Ile-109 to Ile-129, Leu-135 to Thr-155, Val-183 to Ile-203, and Ala-227 to Val-247.

This sequence belongs to the CobS family. Requires Mg(2+) as cofactor.

The protein resides in the cell inner membrane. It carries out the reaction alpha-ribazole + adenosylcob(III)inamide-GDP = adenosylcob(III)alamin + GMP + H(+). The enzyme catalyses alpha-ribazole 5'-phosphate + adenosylcob(III)inamide-GDP = adenosylcob(III)alamin 5'-phosphate + GMP + H(+). It functions in the pathway cofactor biosynthesis; adenosylcobalamin biosynthesis; adenosylcobalamin from cob(II)yrinate a,c-diamide: step 7/7. Joins adenosylcobinamide-GDP and alpha-ribazole to generate adenosylcobalamin (Ado-cobalamin). Also synthesizes adenosylcobalamin 5'-phosphate from adenosylcobinamide-GDP and alpha-ribazole 5'-phosphate. This chain is Adenosylcobinamide-GDP ribazoletransferase, found in Acinetobacter baumannii (strain ATCC 17978 / DSM 105126 / CIP 53.77 / LMG 1025 / NCDC KC755 / 5377).